We begin with the raw amino-acid sequence, 865 residues long: DNA mismatch repair protein MutS (865 aa).

605–612 provides a ligand contact to ATP; the sequence is GPNMAGKS. A disordered region spans residues 814-833; it reads PEPLEAYKPKGNKQPLSDEE.

It belongs to the DNA mismatch repair MutS family.

This protein is involved in the repair of mismatches in DNA. It is possible that it carries out the mismatch recognition step. This protein has a weak ATPase activity. In Halalkalibacterium halodurans (strain ATCC BAA-125 / DSM 18197 / FERM 7344 / JCM 9153 / C-125) (Bacillus halodurans), this protein is DNA mismatch repair protein MutS.